Here is a 310-residue protein sequence, read N- to C-terminus: Probable deoxyhypusine synthase (310 aa).

The active-site Nucleophile is the K284.

It belongs to the deoxyhypusine synthase family. Requires NAD(+) as cofactor.

The catalysed reaction is [eIF5A protein]-L-lysine + spermidine = [eIF5A protein]-deoxyhypusine + propane-1,3-diamine. It participates in protein modification; eIF5A hypusination. Its function is as follows. Catalyzes the NAD-dependent oxidative cleavage of spermidine and the subsequent transfer of the butylamine moiety of spermidine to the epsilon-amino group of a specific lysine residue of the eIF-5A precursor protein to form the intermediate deoxyhypusine residue. The chain is Probable deoxyhypusine synthase (dys) from Thermoplasma volcanium (strain ATCC 51530 / DSM 4299 / JCM 9571 / NBRC 15438 / GSS1).